A 358-amino-acid polypeptide reads, in one-letter code: Aromatic amino acid aminotransferase (358 aa).

The residue at position 219 (K219) is an N6-(pyridoxal phosphate)lysine.

It belongs to the class-II pyridoxal-phosphate-dependent aminotransferase family. As to quaternary structure, homodimer. Pyridoxal 5'-phosphate serves as cofactor.

It catalyses the reaction an aromatic L-alpha-amino acid + 2-oxoglutarate = an aromatic oxo-acid + L-glutamate. In terms of biological role, aminotransferase that catalyzes the conversion of aromatic amino acids and 2-oxoglutarate into corresponding aromatic oxo acids and L-glutamate. This chain is Aromatic amino acid aminotransferase, found in Nocardia farcinica (strain IFM 10152).